Reading from the N-terminus, the 595-residue chain is Aspartate--tRNA(Asp/Asn) ligase (595 aa).

E175 contributes to the L-aspartate binding site. Residues 199 to 202 are aspartate; it reads QQYK. L-aspartate-binding residues include R221 and H454. ATP is bound at residue 221-223; it reads RDE. ATP is bound at residue E488. Residue R495 coordinates L-aspartate. ATP is bound at residue 540–543; that stretch reads GIDR.

Belongs to the class-II aminoacyl-tRNA synthetase family. Type 1 subfamily. Homodimer.

The protein localises to the cytoplasm. The catalysed reaction is tRNA(Asx) + L-aspartate + ATP = L-aspartyl-tRNA(Asx) + AMP + diphosphate. Its function is as follows. Aspartyl-tRNA synthetase with relaxed tRNA specificity since it is able to aspartylate not only its cognate tRNA(Asp) but also tRNA(Asn). Reaction proceeds in two steps: L-aspartate is first activated by ATP to form Asp-AMP and then transferred to the acceptor end of tRNA(Asp/Asn). The polypeptide is Aspartate--tRNA(Asp/Asn) ligase (Sinorhizobium fredii (strain NBRC 101917 / NGR234)).